The primary structure comprises 237 residues: Glucosamine-6-phosphate deaminase (237 aa).

The Proton acceptor; for enolization step role is filled by Asp-67. Asn-136 functions as the For ring-opening step in the catalytic mechanism. His-138 (proton acceptor; for ring-opening step) is an active-site residue. Residue Glu-143 is the For ring-opening step of the active site.

The protein belongs to the glucosamine/galactosamine-6-phosphate isomerase family. NagB subfamily.

It catalyses the reaction alpha-D-glucosamine 6-phosphate + H2O = beta-D-fructose 6-phosphate + NH4(+). It participates in amino-sugar metabolism; N-acetylneuraminate degradation; D-fructose 6-phosphate from N-acetylneuraminate: step 5/5. Functionally, catalyzes the reversible isomerization-deamination of glucosamine 6-phosphate (GlcN6P) to form fructose 6-phosphate (Fru6P) and ammonium ion. This chain is Glucosamine-6-phosphate deaminase, found in Lysinibacillus sphaericus (strain C3-41).